A 507-amino-acid chain; its full sequence is ATP synthase subunit alpha (507 aa).

ATP is bound at residue G170–T177.

Belongs to the ATPase alpha/beta chains family. In terms of assembly, F-type ATPases have 2 components, CF(1) - the catalytic core - and CF(0) - the membrane proton channel. CF(1) has five subunits: alpha(3), beta(3), gamma(1), delta(1), epsilon(1). CF(0) has three main subunits: a(1), b(2) and c(9-12). The alpha and beta chains form an alternating ring which encloses part of the gamma chain. CF(1) is attached to CF(0) by a central stalk formed by the gamma and epsilon chains, while a peripheral stalk is formed by the delta and b chains.

The protein resides in the cell inner membrane. The catalysed reaction is ATP + H2O + 4 H(+)(in) = ADP + phosphate + 5 H(+)(out). Functionally, produces ATP from ADP in the presence of a proton gradient across the membrane. The alpha chain is a regulatory subunit. The chain is ATP synthase subunit alpha from Thermosipho africanus (strain TCF52B).